The following is a 153-amino-acid chain: Peritrophin-1 (153 aa).

Residues 1-17 (MKVSASLVLLLAAAVLA) form the signal peptide. 2 Chitin-binding type-2 domains span residues 18-79 (DDRC…QCAP) and 92-153 (SPNC…QCEE). 2 cysteine pairs are disulfide-bonded: cysteine 56/cysteine 69 and cysteine 130/cysteine 143. Asparagine 63 is a glycosylation site (N-linked (GlcNAc...) asparagine).

Glycosylated. As to expression, adult peritrophic membrane.

Binds chitin but not cellulose. May be involved in the spatial organization of PM. This chain is Peritrophin-1 (Aper1), found in Anopheles gambiae (African malaria mosquito).